The primary structure comprises 393 residues: Zinc-regulated GTPase metalloprotein activator 1 (393 aa).

The short motif at 16 to 23 (EDCPELVP) is the psi-PxLVp motif element. 47–54 (GYLGAGKT) provides a ligand contact to GTP. Residues Cys-105, Cys-107, and Cys-108 each coordinate Zn(2+). Residues 105 to 108 (CLCC) carry the CXCC motif motif. Residues 108 to 112 (CSVKD) and 201 to 204 (NKTD) contribute to the GTP site. A CobW C-terminal domain is found at 271 to 374 (IVTVTFEVPG…VLQQLFLTAV (104 aa)).

It belongs to the SIMIBI class G3E GTPase family. ZNG1 subfamily. In terms of tissue distribution, present at high level in the nuclei of the ureteric bud cells in the developing kidneys.

It is found in the nucleus. It carries out the reaction GTP + H2O = GDP + phosphate + H(+). In terms of biological role, zinc chaperone that directly transfers zinc cofactor to target metalloproteins, thereby activating them. Catalyzes zinc insertion into the active site of methionine aminopeptidase METAP1, which function to cleave the initiator methionine from polypeptides during or after protein translation. Mechanistically, the N-terminal psi-PxLVp motif binds to the C6H2-type zinc finger of inactive form of METAP1. After formation of the docked complex, zinc is transferred from the CXCC motif in the GTPase domain of ZNG1 to the zinc binding site in the peptidase domain of METAP1 in a process requiring GTP hydrolysis. GTP/GDP exchange is required for release of active METAP1. This is Zinc-regulated GTPase metalloprotein activator 1 (Zng1) from Mus musculus (Mouse).